The sequence spans 81 residues: UPF0298 protein SAK_1599 (81 aa).

Belongs to the UPF0298 family.

The protein resides in the cytoplasm. This Streptococcus agalactiae serotype Ia (strain ATCC 27591 / A909 / CDC SS700) protein is UPF0298 protein SAK_1599.